The following is a 147-amino-acid chain: Ribonuclease H (147 aa).

The RNase H type-1 domain occupies 3–145 (TEDRVEIYTD…ADQLANKGVE (143 aa)). The Mg(2+) site is built by D12, E50, D72, and D137.

This sequence belongs to the RNase H family. As to quaternary structure, monomer. Mg(2+) is required as a cofactor.

It is found in the cytoplasm. It carries out the reaction Endonucleolytic cleavage to 5'-phosphomonoester.. Its function is as follows. Endonuclease that specifically degrades the RNA of RNA-DNA hybrids. The sequence is that of Ribonuclease H from Chromobacterium violaceum (strain ATCC 12472 / DSM 30191 / JCM 1249 / CCUG 213 / NBRC 12614 / NCIMB 9131 / NCTC 9757 / MK).